We begin with the raw amino-acid sequence, 320 residues long: Cytochrome f (320 aa).

The N-terminal stretch at 1–35 (MQNRNTFSWVKEQMTRSIFVSMMIYIITRASISNA) is a signal peptide. Heme contacts are provided by Tyr36, Cys56, Cys59, and His60. Residues 286–306 (IQGLFLFLASVILAQIFLVLK) traverse the membrane as a helical segment.

Belongs to the cytochrome f family. As to quaternary structure, the 4 large subunits of the cytochrome b6-f complex are cytochrome b6, subunit IV (17 kDa polypeptide, petD), cytochrome f and the Rieske protein, while the 4 small subunits are PetG, PetL, PetM and PetN. The complex functions as a dimer. The cofactor is heme.

Its subcellular location is the plastid. The protein localises to the chloroplast thylakoid membrane. In terms of biological role, component of the cytochrome b6-f complex, which mediates electron transfer between photosystem II (PSII) and photosystem I (PSI), cyclic electron flow around PSI, and state transitions. This Amborella trichopoda protein is Cytochrome f.